The primary structure comprises 418 residues: Tyrosine--tRNA ligase (418 aa).

Tyrosine 39 is a binding site for L-tyrosine. Residues 44 to 53 carry the 'HIGH' region motif; the sequence is CTAASLHVGH. 2 residues coordinate L-tyrosine: tyrosine 176 and glutamine 180. Residues 236 to 240 carry the 'KMSKS' region motif; it reads KMGKT. Lysine 239 contacts ATP. In terms of domain architecture, S4 RNA-binding spans 350–418; it reads IGVLVAFAEK…KKKHVLLRLA (69 aa).

It belongs to the class-I aminoacyl-tRNA synthetase family. TyrS type 1 subfamily. As to quaternary structure, homodimer.

The protein localises to the cytoplasm. The enzyme catalyses tRNA(Tyr) + L-tyrosine + ATP = L-tyrosyl-tRNA(Tyr) + AMP + diphosphate + H(+). Its function is as follows. Catalyzes the attachment of tyrosine to tRNA(Tyr) in a two-step reaction: tyrosine is first activated by ATP to form Tyr-AMP and then transferred to the acceptor end of tRNA(Tyr). This Rhodopseudomonas palustris (strain ATCC BAA-98 / CGA009) protein is Tyrosine--tRNA ligase.